Reading from the N-terminus, the 712-residue chain is DNA ligase (712 aa).

Residues 53–57, 103–104, and glutamate 133 each bind NAD(+); these read DAEFD and SL. The N6-AMP-lysine intermediate role is filled by lysine 135. Arginine 156, glutamate 196, lysine 315, and lysine 339 together coordinate NAD(+). The Zn(2+) site is built by cysteine 433, cysteine 436, cysteine 452, and cysteine 458. The region spanning 622–711 is the BRCT domain; sequence SIERTLEGLS…PERDAEDGEP (90 aa).

The protein belongs to the NAD-dependent DNA ligase family. LigA subfamily. Mg(2+) serves as cofactor. It depends on Mn(2+) as a cofactor.

The catalysed reaction is NAD(+) + (deoxyribonucleotide)n-3'-hydroxyl + 5'-phospho-(deoxyribonucleotide)m = (deoxyribonucleotide)n+m + AMP + beta-nicotinamide D-nucleotide.. DNA ligase that catalyzes the formation of phosphodiester linkages between 5'-phosphoryl and 3'-hydroxyl groups in double-stranded DNA using NAD as a coenzyme and as the energy source for the reaction. It is essential for DNA replication and repair of damaged DNA. The protein is DNA ligase of Mycolicibacterium gilvum (strain PYR-GCK) (Mycobacterium gilvum (strain PYR-GCK)).